Reading from the N-terminus, the 169-residue chain is CRISPR system Cmr subunit Cmr5 (169 aa).

This sequence belongs to the CRISPR system Cmr5 family. Monomer in isolation. Part of the type III-B Cmr ribonucleoprotein (RNP) complex, an elongated RNP with Cmr2 and Cmr3 as the base, with Cmr4 and Cmr5 forming a helical core along the mature crRNA (39 or 45 nt in length), while the complex is capped by Cmr6 and Cmr1. The 5' end of the crRNA is bound to Cmr2 and Cmr3, while Cmr6 and a Cmr1 subunit (Cmr1-1 or Cmr1-2) cap the 3' end of the crRNA. The target RNA lies antiparallel to the crRNA, with its 5' end near Cmr1 and Cmr6 and its 3' end near Cmr2 and Cmr3; major target cleavage occurs nears the junction of Cmr1/Cmr6 and Cmr4/Cmr, with minor cleavage occurring at 6 nt intervals which coincide with the proposed spacing of Cmr4 subunits. Interacts with Cmr4. Interacts with Cmr2, Cmr4 and Cmr6.

It localises to the cytoplasm. Functionally, CRISPR (clustered regularly interspaced short palindromic repeat), is an adaptive immune system that provides protection against mobile genetic elements (viruses, transposable elements and conjugative plasmids). CRISPR clusters contain sequences complementary to antecedent mobile elements and target invading nucleic acids. CRISPR clusters are transcribed and processed into CRISPR RNA (crRNA), formerly called psiRNA (prokaryotic silencing) in this organism. Part of the Cmr ribonucleoprotein complex which has divalent cation-dependent endoribonuclease activity specific for ssRNA complementary to the crRNA (target NRA), generating 5' hydroxy- and 3' phosphate or 2'-3' cyclic phosphate termini. Cmr4 is probably the subunit that cleaves target RNA. Cmr complex does not cleave ssDNA complementary to the crRNA. Cleavage of invading RNA is guided by the crRNA; substrate cleavage occurs a fixed distance (14 nt) from the 3' end of the crRNA. In vitro reconstitution shows Cmr1-2 and Cmr5 are not absolutely necessary for target cleavage. The chain is CRISPR system Cmr subunit Cmr5 from Pyrococcus furiosus (strain ATCC 43587 / DSM 3638 / JCM 8422 / Vc1).